An 876-amino-acid chain; its full sequence is E3 ubiquitin-protein ligase TRIM71 (876 aa).

The RING-type zinc-finger motif lies at 12 to 90 (CPLCKEMCGS…ALKLRCPICD (79 aa)). Low complexity predominate over residues 26–40 (SSNSSTSSSSSQTSG). Disordered stretches follow at residues 26–46 (SSNS…GGGG) and 128–192 (KNGR…AALL). Gly residues predominate over residues 137-148 (PAAGSGAGGGGA). Positions 160-182 (RAAAAASSPAAGSAAPSASSSSS) are enriched in low complexity. Residues 200 to 247 (QGEPRCSSCDEGNAASSRCLDCQEHLCDNCVRAHQRVRLTKDHFIERF) form a B box-type 1; atypical zinc finger. Zn(2+)-binding residues include cysteine 205, cysteine 208, cysteine 229, histidine 233, cysteine 286, histidine 289, cysteine 309, and histidine 314. The B box-type 2 zinc-finger motif lies at 281–322 (ERASYCQHHDDEVLHFYCDTCSVPICRECTMGRHVGHSFIYL). Coiled-coil stretches lie at residues 344-373 (RQAI…SEVK) and 399-434 (QVKA…EEGR). The stretch at 487 to 588 (SSGAFAPLTK…IENSPFKVVV (102 aa)) is one Filamin repeat. NHL repeat units follow at residues 601-644 (GLSF…FKPC), 648-691 (HHKF…FTFE), 695-738 (ILKF…FGPD), 742-785 (LNKY…IHAD), 789-832 (ARFL…FESN), and 836-876 (LCKF…ILVF).

This sequence belongs to the TRIM/RBCC family.

It localises to the cytoplasm. Its subcellular location is the P-body. The enzyme catalyses S-ubiquitinyl-[E2 ubiquitin-conjugating enzyme]-L-cysteine + [acceptor protein]-L-lysine = [E2 ubiquitin-conjugating enzyme]-L-cysteine + N(6)-ubiquitinyl-[acceptor protein]-L-lysine.. It functions in the pathway protein modification; protein ubiquitination. In terms of biological role, E3 ubiquitin-protein ligase that cooperates with the microRNAs (miRNAs) machinery and promotes embryonic stem cells proliferation and maintenance. Binds to miRNAs and participates in post-transcriptional repression of transcripts. Required to maintain proliferation and prevent premature differentiation of neural progenitor cells during early neural development. In Gallus gallus (Chicken), this protein is E3 ubiquitin-protein ligase TRIM71 (TRIM71).